The chain runs to 318 residues: Transaldolase (318 aa).

The active-site Schiff-base intermediate with substrate is the K132.

Belongs to the transaldolase family. Type 1 subfamily. As to quaternary structure, homodimer.

It is found in the cytoplasm. The enzyme catalyses D-sedoheptulose 7-phosphate + D-glyceraldehyde 3-phosphate = D-erythrose 4-phosphate + beta-D-fructose 6-phosphate. Its pathway is carbohydrate degradation; pentose phosphate pathway; D-glyceraldehyde 3-phosphate and beta-D-fructose 6-phosphate from D-ribose 5-phosphate and D-xylulose 5-phosphate (non-oxidative stage): step 2/3. Its function is as follows. Transaldolase is important for the balance of metabolites in the pentose-phosphate pathway. The protein is Transaldolase of Shewanella baltica (strain OS155 / ATCC BAA-1091).